The primary structure comprises 92 residues: MDKLKKPILTEKSISLLEKRQYTFELDKNITKSEAKKMIETHFQVKVIHMNSYYLPINKKIRKNIGKLKRKKRMIFTLKVGDSIPFSSINMN.

The protein belongs to the universal ribosomal protein uL23 family. Part of the 50S ribosomal subunit.

The protein resides in the plastid. Its subcellular location is the chloroplast. In terms of biological role, binds to 23S rRNA. This chain is Large ribosomal subunit protein uL23c (rpl23), found in Chara vulgaris (Common stonewort).